A 445-amino-acid polypeptide reads, in one-letter code: MDIQNIKETIAMIEEQNFDIRTITMGISLLDCIDADIDKAAEKIYQKIVNKAGKLVEVGNEIGHELGIKIVNKRVSVTPIAIIGAATAADDYTPLALAMDRAAKEIGIDFIGGYSALVQKGYQKGDEILIKSMPKALAATERVCASVNVGSTKSGINMTAVRDMGETIKIMSKGDKWLNAKLVVFANAVEDNPFMAGAFHGVGEADTIINVGVSGPGVVKRALEKVRGESFDILAETIKKTAFKITRIGQLVGQMASERLNVEFGIVDLSLAPTPAIGDSVARVLEEMGLETVGTHGTTAALAMLNDAVKKGGVMAAERVGGLSGAFIPVSEDEGMIAAVNSGALNIEKLEAMTCVCSVGLDMIAIPEETPASTIAAMIADEAAIGVINQKTTAVRIIPMGKEGEQIEFGGLFGVAPVMRVNKASSADFIARGGQIPAPIHSFKN.

It belongs to the UPF0210 family. As to quaternary structure, homodimer.

This chain is UPF0210 protein LACR_1020, found in Lactococcus lactis subsp. cremoris (strain SK11).